The primary structure comprises 154 residues: Oleosin 16.4 kDa (154 aa).

An N-acetylalanine modification is found at Ala2. The segment at 2 to 33 (ADRDRSYRTFDQVVRGDRTNYQSGPSTTQVLT) is polar. The next 3 helical transmembrane spans lie at 31–51 (VLTV…AGLT), 65–85 (LFVI…MAVA), and 86–106 (GFLS…YVFN). The hydrophobic stretch occupies residues 34–105 (VLTLLPIGGT…TGLSSLSYVF (72 aa)).

This sequence belongs to the oleosin family.

It is found in the lipid droplet. The protein resides in the membrane. In terms of biological role, may have a structural role to stabilize the lipid body during desiccation of the seed by preventing coalescence of the oil. Probably interacts with both lipid and phospholipid moieties of lipid bodies. May also provide recognition signals for specific lipase anchorage in lipolysis during seedling growth. This is Oleosin 16.4 kDa (MATP7) from Gossypium hirsutum (Upland cotton).